Reading from the N-terminus, the 139-residue chain is Low molecular weight protein-tyrosine-phosphatase PtpB (139 aa).

Residue Cys-7 is the Nucleophile of the active site. Arg-13 is an active-site residue. Residue Asp-111 is the Proton donor of the active site.

It belongs to the low molecular weight phosphotyrosine protein phosphatase family.

It catalyses the reaction O-phospho-L-tyrosyl-[protein] + H2O = L-tyrosyl-[protein] + phosphate. Its activity is regulated as follows. Inhibited by N-ethylmaleimide and sodium orthovanadate. Functionally, dephosphorylates the phosphotyrosine-containing proteins. This is Low molecular weight protein-tyrosine-phosphatase PtpB (ptpB) from Staphylococcus aureus.